The following is a 326-amino-acid chain: DNA-directed RNA polymerase subunit alpha (326 aa).

Residues 1–231 form an alpha N-terminal domain (alpha-NTD) region; it reads MQTNLLKPKI…DQLVVFAALE (231 aa). Residues 247-326 are alpha C-terminal domain (alpha-CTD); it reads VDPMLMRPVD…ESWPPANLEK (80 aa).

Belongs to the RNA polymerase alpha chain family. In terms of assembly, homodimer. The RNAP catalytic core consists of 2 alpha, 1 beta, 1 beta' and 1 omega subunit. When a sigma factor is associated with the core the holoenzyme is formed, which can initiate transcription.

It carries out the reaction RNA(n) + a ribonucleoside 5'-triphosphate = RNA(n+1) + diphosphate. DNA-dependent RNA polymerase catalyzes the transcription of DNA into RNA using the four ribonucleoside triphosphates as substrates. The sequence is that of DNA-directed RNA polymerase subunit alpha from Polynucleobacter necessarius subsp. necessarius (strain STIR1).